A 79-amino-acid polypeptide reads, in one-letter code: Sec-independent protein translocase protein TatA (79 aa).

The chain crosses the membrane as a helical span at residues 1-21 (MGGFTSIWHWVIVLLVIVLLF). The segment at 48–79 (EEEAKNEPKTLDAQATQTKVHESSEIKSKQES) is disordered. The span at 66–79 (KVHESSEIKSKQES) shows a compositional bias: basic and acidic residues.

Belongs to the TatA/E family. As to quaternary structure, the Tat system comprises two distinct complexes: a TatABC complex, containing multiple copies of TatA, TatB and TatC subunits, and a separate TatA complex, containing only TatA subunits. Substrates initially bind to the TatABC complex, which probably triggers association of the separate TatA complex to form the active translocon.

It is found in the cell inner membrane. Part of the twin-arginine translocation (Tat) system that transports large folded proteins containing a characteristic twin-arginine motif in their signal peptide across membranes. TatA could form the protein-conducting channel of the Tat system. In Helicobacter pylori (strain ATCC 700392 / 26695) (Campylobacter pylori), this protein is Sec-independent protein translocase protein TatA.